The following is a 237-amino-acid chain: Proteasome subunit beta (237 aa).

The interval 1 to 27 (MSKFPDLPGMKNLDANPYEPELASFDD) is disordered. A propeptide spans 1–42 (MSKFPDLPGMKNLDANPYEPELASFDDMDADAGDGDAVAKTG) (removed in mature form; by autocatalysis). T43 serves as the catalytic Nucleophile.

Belongs to the peptidase T1B family. As to quaternary structure, the 20S proteasome core is composed of 14 alpha and 14 beta subunits that assemble into four stacked heptameric rings, resulting in a barrel-shaped structure. The two inner rings, each composed of seven catalytic beta subunits, are sandwiched by two outer rings, each composed of seven alpha subunits. The catalytic chamber with the active sites is on the inside of the barrel. Has a gated structure, the ends of the cylinder being occluded by the N-termini of the alpha-subunits. Is capped at one or both ends by the proteasome regulatory ATPase, PAN.

Its subcellular location is the cytoplasm. It catalyses the reaction Cleavage of peptide bonds with very broad specificity.. With respect to regulation, the formation of the proteasomal ATPase PAN-20S proteasome complex, via the docking of the C-termini of PAN into the intersubunit pockets in the alpha-rings, triggers opening of the gate for substrate entry. Interconversion between the open-gate and close-gate conformations leads to a dynamic regulation of the 20S proteasome proteolysis activity. Component of the proteasome core, a large protease complex with broad specificity involved in protein degradation. The sequence is that of Proteasome subunit beta from Halomicrobium mukohataei (strain ATCC 700874 / DSM 12286 / JCM 9738 / NCIMB 13541) (Haloarcula mukohataei).